A 179-amino-acid polypeptide reads, in one-letter code: Cytochrome b6-f complex iron-sulfur subunit (179 aa).

A helical transmembrane segment spans residues 21-43 (LLTFGTVTGVALGALYPVVKYFI). Residues 61–162 (GNDVSLSKFL…ANTVDDKIIL (102 aa)) form the Rieske domain. [2Fe-2S] cluster contacts are provided by Cys108, His110, Cys126, and His129. Cys113 and Cys128 are oxidised to a cystine.

It belongs to the Rieske iron-sulfur protein family. As to quaternary structure, the 4 large subunits of the cytochrome b6-f complex are cytochrome b6, subunit IV (17 kDa polypeptide, PetD), cytochrome f and the Rieske protein, while the 4 small subunits are PetG, PetL, PetM and PetN. The complex functions as a dimer. The cofactor is [2Fe-2S] cluster.

The protein resides in the cellular thylakoid membrane. The catalysed reaction is 2 oxidized [plastocyanin] + a plastoquinol + 2 H(+)(in) = 2 reduced [plastocyanin] + a plastoquinone + 4 H(+)(out). In terms of biological role, component of the cytochrome b6-f complex, which mediates electron transfer between photosystem II (PSII) and photosystem I (PSI), cyclic electron flow around PSI, and state transitions. This is Cytochrome b6-f complex iron-sulfur subunit from Desmonostoc sp. (strain PCC 7906) (Nostoc sp. (strain PCC 7906)).